Reading from the N-terminus, the 230-residue chain is Protein GrpE (230 aa).

Disordered regions lie at residues 1–26 (MADE…DREA) and 209–230 (GVSK…EDNA). A compositionally biased stretch (polar residues) spans 221 to 230 (NGASTSEDNA).

The protein belongs to the GrpE family. Homodimer.

The protein localises to the cytoplasm. Its function is as follows. Participates actively in the response to hyperosmotic and heat shock by preventing the aggregation of stress-denatured proteins, in association with DnaK and GrpE. It is the nucleotide exchange factor for DnaK and may function as a thermosensor. Unfolded proteins bind initially to DnaJ; upon interaction with the DnaJ-bound protein, DnaK hydrolyzes its bound ATP, resulting in the formation of a stable complex. GrpE releases ADP from DnaK; ATP binding to DnaK triggers the release of the substrate protein, thus completing the reaction cycle. Several rounds of ATP-dependent interactions between DnaJ, DnaK and GrpE are required for fully efficient folding. The polypeptide is Protein GrpE (Brucella suis biovar 1 (strain 1330)).